The chain runs to 230 residues: Sugar fermentation stimulation protein homolog (230 aa).

This sequence belongs to the SfsA family.

The chain is Sugar fermentation stimulation protein homolog from Clostridium perfringens (strain 13 / Type A).